The following is a 335-amino-acid chain: Nucleoid-associated protein PputW619_4243 (335 aa).

The protein belongs to the YejK family.

It localises to the cytoplasm. Its subcellular location is the nucleoid. This Pseudomonas putida (strain W619) protein is Nucleoid-associated protein PputW619_4243.